The primary structure comprises 84 residues: Small ribosomal subunit protein eS27z (84 aa).

Residues 39 to 61 (CQGCFNITTVFSHSQTVVMCGNC) form a C4-type zinc finger.

The protein belongs to the eukaryotic ribosomal protein eS27 family. As to quaternary structure, (Microbial infection) May interact with Tomato yellow leaf curl virus (TYLCV) and papaya leaf curl China virus (PaLcuCNV) C2 proteins. This interaction prevents activation of Jasmonate signaling, thereby facilitating viral uptake by insects vectors. The cofactor is Zn(2+).

The protein is Small ribosomal subunit protein eS27z (RPS27A) of Arabidopsis thaliana (Mouse-ear cress).